Here is a 1386-residue protein sequence, read N- to C-terminus: Putative ATP-dependent RNA helicase DHX57 (1386 aa).

A compositionally biased stretch (basic residues) spans 1–11 (MSSSVRRKGKP). Disordered regions lie at residues 1-106 (MSSS…MTSE) and 120-147 (EQDA…NDER). Gly residues-rich tracts occupy residues 12–23 (GKGGGKGSSRGG) and 35–50 (GSGG…GGGN). The stretch at 101–125 (LHMTSENQEKVKALLRDLQEQDADA) forms a coiled coil. Residues serine 127 and serine 132 each carry the phosphoserine modification. The segment covering 133 to 143 (GEEEDDEPDCC) has biased composition (acidic residues). The 41-residue stretch at 180–220 (TVSPFAVQKLSRYGFNTERCQAVLRMCDGDVGASLEHLLTQ) folds into the UBA domain. A C3H1-type zinc finger spans residues 299-326 (ENSLEICKFYLKGNCKFGSKCRFKHEVP). Phosphoserine occurs at positions 475, 477, and 480. Positions 554-721 (LNLLRKHQVV…FNSCPVITIP (168 aa)) constitute a Helicase ATP-binding domain. Residue 567–574 (GMTGCGKT) coordinates ATP. A DEVH box motif is present at residues 668-671 (DEVH). Residues 830 to 1010 (LIEALLEWIV…QLCLRIKILE (181 aa)) enclose the Helicase C-terminal domain.

This sequence belongs to the DEAD box helicase family. DEAH subfamily.

It catalyses the reaction ATP + H2O = ADP + phosphate + H(+). Functionally, probable ATP-binding RNA helicase. The sequence is that of Putative ATP-dependent RNA helicase DHX57 (DHX57) from Homo sapiens (Human).